A 525-amino-acid polypeptide reads, in one-letter code: G patch domain-containing protein 3 (525 aa).

Residues 264-316 (YLADIPASPCGEPEEEVGKEEEEESHSDEDDDRGEEWERHEALHEDVTGQERT) form a disordered region. Residues 275–298 (EPEEEVGKEEEEESHSDEDDDRGE) show a composition bias toward acidic residues. Over residues 299–316 (EWERHEALHEDVTGQERT) the composition is skewed to basic and acidic residues. The 49-residue stretch at 410-458 (TKGIGRKVMERQGWAEGQGLGCRCSGVPEALDSDGQHPRCKRGLGYHGE) folds into the G-patch domain.

In terms of assembly, interacts with mitochondrial MAVS; the interaction is markedly increased upon viral infection. In terms of tissue distribution, expressed in ocular tissues including retinal pigment epithelium, cornea, ciliary muscle and non-pigmented ciliary epithelium. Also expressed in optic nerve, cartilage, skin and lymph node.

It is found in the nucleus. It localises to the cytoplasm. Its function is as follows. Involved in transcriptional regulation. It is able to activate transcription from the CXCR4 promoter and therefore it might control neural crest cell migration involved in ocular and craniofacial development. Is a negative regulator of immune antiviral response, acting via down-regulation of RIG-I-like receptors signaling and inhibition of type I interferon production. The control mechanism involves interaction with mitochondrial MAVS and inhibition of MAVS assembly with downstream proteins implicated in antiviral response, such as TBK1 and TRAF6. In Homo sapiens (Human), this protein is G patch domain-containing protein 3 (GPATCH3).